A 109-amino-acid chain; its full sequence is Phosphoribosyl-ATP pyrophosphatase (109 aa).

This sequence belongs to the PRA-PH family.

The protein localises to the cytoplasm. It catalyses the reaction 1-(5-phospho-beta-D-ribosyl)-ATP + H2O = 1-(5-phospho-beta-D-ribosyl)-5'-AMP + diphosphate + H(+). Its pathway is amino-acid biosynthesis; L-histidine biosynthesis; L-histidine from 5-phospho-alpha-D-ribose 1-diphosphate: step 2/9. This is Phosphoribosyl-ATP pyrophosphatase from Azorhizobium caulinodans (strain ATCC 43989 / DSM 5975 / JCM 20966 / LMG 6465 / NBRC 14845 / NCIMB 13405 / ORS 571).